Here is a 164-residue protein sequence, read N- to C-terminus: Phosphopantetheine adenylyltransferase (164 aa).

S9 contacts substrate. Residues 9-10 (SF) and H17 contribute to the ATP site. 3 residues coordinate substrate: K41, V78, and R92. Residues 93 to 95 (GLR), E103, and 128 to 134 (SRPITAT) each bind ATP.

This sequence belongs to the bacterial CoaD family. Homohexamer. Mg(2+) serves as cofactor.

Its subcellular location is the cytoplasm. The enzyme catalyses (R)-4'-phosphopantetheine + ATP + H(+) = 3'-dephospho-CoA + diphosphate. The protein operates within cofactor biosynthesis; coenzyme A biosynthesis; CoA from (R)-pantothenate: step 4/5. In terms of biological role, reversibly transfers an adenylyl group from ATP to 4'-phosphopantetheine, yielding dephospho-CoA (dPCoA) and pyrophosphate. The chain is Phosphopantetheine adenylyltransferase from Sinorhizobium fredii (strain NBRC 101917 / NGR234).